Here is a 577-residue protein sequence, read N- to C-terminus: ABC transporter G family member 4 (577 aa).

An ABC transporter domain is found at 6-248 (LSTSSISYAK…LLSKGFTVPS (243 aa)). 48–55 (GPSGAGKS) is an ATP binding site. Positions 299-509 (TEISLLSSRF…ALDALLINEY (211 aa)) constitute an ABC transmembrane type-2 domain. 7 consecutive transmembrane segments (helical) span residues 318–338 (LLLTNILESLVVGLVLGTIYL), 353–373 (LFAFTLTFLLSSTTQTLPIFI), 400–420 (VFLPYLLLIAIIYSVSLYFLV), 429–449 (LAYFVLVIWIIVLMANSFVLF), 458–478 (IAGTSSVTILLAAFFLFSGYF), 487–507 (YWLFMYFFSMYKYALDALLIN), and 548–568 (FNVYMLLGFFVLYRVLCFLVL).

It belongs to the ABC transporter superfamily. ABCG family. Eye pigment precursor importer (TC 3.A.1.204) subfamily.

It localises to the membrane. The polypeptide is ABC transporter G family member 4 (ABCG4) (Arabidopsis thaliana (Mouse-ear cress)).